The following is a 182-amino-acid chain: Protein Syd (182 aa).

The protein belongs to the Syd family.

Its subcellular location is the cell inner membrane. Interacts with the SecY protein in vivo. May bind preferentially to an uncomplexed state of SecY, thus functioning either as a chelating agent for excess SecY in the cell or as a regulatory factor that negatively controls the translocase function. This Aliivibrio salmonicida (strain LFI1238) (Vibrio salmonicida (strain LFI1238)) protein is Protein Syd.